A 539-amino-acid polypeptide reads, in one-letter code: Efflux pump roqT (539 aa).

The disordered stretch occupies residues 1–25 (MEKEVATDPLPQEIPSDAPDEGGSL). The next 12 membrane-spanning stretches (helical) occupy residues 36 to 56 (VSLT…VTII), 108 to 128 (LFLF…VGLI), 133 to 153 (IAGL…AQTV), 160 to 180 (VFTA…PPLG), 191 to 211 (WCFY…LFFF), 233 to 253 (IGSF…QWGG), 262 to 282 (RIIV…AVQI), 305 to 325 (WFAI…PIWF), 338 to 360 (VMNL…LVTI), 362 to 384 (GYYN…LLST), 395 to 415 (IGYQ…PFMV), and 502 to 522 (AFYV…ALEW).

The protein belongs to the major facilitator superfamily. TCR/Tet family.

It localises to the membrane. Its function is as follows. Efflux pump; part of the gene cluster that mediates the biosynthesis of the mycotoxins roquefortine C and meleagrin. The sequence is that of Efflux pump roqT from Penicillium rubens (strain ATCC 28089 / DSM 1075 / NRRL 1951 / Wisconsin 54-1255) (Penicillium chrysogenum).